Reading from the N-terminus, the 325-residue chain is Aldo-keto reductase family 1 member A1 (325 aa).

Ala-2 bears the N-acetylalanine mark. The residue at position 4 (Ser-4) is a Phosphoserine. NADP(+)-binding positions include 11–20 (GQKMPLIGLG), Thr-21, and Trp-22. Ser-38 carries the phosphoserine modification. Asp-45 is a binding site for NADP(+). The active-site Proton donor is Tyr-50. An N6-acetyllysine; alternate modification is found at Lys-127. At Lys-127 the chain carries N6-succinyllysine; alternate. Position 145 is an N6-succinyllysine (Lys-145). NADP(+) contacts are provided by Ser-162, Asn-163, Ser-211, Leu-213, Ser-215, Ser-216, Lys-263, Ser-264, Ile-265, Thr-266, Arg-269, Gln-272, and Asn-273. Residue Ser-211 is modified to Phosphoserine.

Belongs to the aldo/keto reductase family.

It localises to the cytoplasm. Its subcellular location is the cytosol. It is found in the apical cell membrane. The catalysed reaction is a primary alcohol + NADP(+) = an aldehyde + NADPH + H(+). It carries out the reaction L-gulonate + NADP(+) = aldehydo-D-glucuronate + NADPH + H(+). The enzyme catalyses L-gulono-1,4-lactone + NADP(+) = D-glucurono-3,6-lactone + NADPH + H(+). It catalyses the reaction allyl alcohol + NADP(+) = acrolein + NADPH + H(+). The catalysed reaction is glycerol + NADP(+) = D-glyceraldehyde + NADPH + H(+). It carries out the reaction glycerol + NADP(+) = L-glyceraldehyde + NADPH + H(+). The enzyme catalyses hydroxyacetone + NADP(+) = methylglyoxal + NADPH + H(+). It catalyses the reaction 3-deoxyfructose + NADP(+) = 3-deoxyglucosone + NADPH + H(+). The catalysed reaction is (R)-mevalonate + NADP(+) = (R)-mevaldate + NADPH + H(+). It carries out the reaction pyridine 3-methanol + NADP(+) = pyridine-3-carbaldehyde + NADPH + H(+). The enzyme catalyses S-nitroso-CoA + NADPH + H(+) = sulfinamide-CoA + NADP(+). It catalyses the reaction S-nitrosoglutathione + NADPH + H(+) = S-(hydroxysulfenamide)glutathione + NADP(+). In terms of biological role, catalyzes the NADPH-dependent reduction of a wide variety of carbonyl-containing compounds to their corresponding alcohols. Displays enzymatic activity towards endogenous metabolites such as aromatic and aliphatic aldehydes, ketones, monosaccharides and bile acids, with a preference for negatively charged substrates, such as glucuronate and succinic semialdehyde. Functions as a detoxifiying enzyme by reducing a range of toxic aldehydes. Reduces methylglyoxal and 3-deoxyglucosone, which are present at elevated levels under hyperglycemic conditions and are cytotoxic. Involved also in the detoxification of lipid-derived aldehydes like acrolein. Plays a role in the activation of procarcinogens, such as polycyclic aromatic hydrocarbon trans-dihydrodiols, and in the metabolism of various xenobiotics and drugs. Also acts as an inhibitor of protein S-nitrosylation by mediating degradation of S-nitroso-coenzyme A (S-nitroso-CoA), a cofactor required to S-nitrosylate proteins. S-nitroso-CoA reductase activity is involved in reprogramming intermediary metabolism in renal proximal tubules, notably by inhibiting protein S-nitrosylation of isoform 2 of PKM (PKM2). Also acts as a S-nitroso-glutathione reductase by catalyzing the NADPH-dependent reduction of S-nitrosoglutathione. Displays no reductase activity towards retinoids. The protein is Aldo-keto reductase family 1 member A1 (AKR1A1) of Pongo abelii (Sumatran orangutan).